Reading from the N-terminus, the 445-residue chain is Probable carboxypeptidase UREG_07869 (445 aa).

An N-terminal signal peptide occupies residues 1–17 (MKSLILTTLALLPLVSC). D165 provides a ligand contact to Zn(2+). Catalysis depends on E197, which acts as the Proton acceptor. E198 lines the Zn(2+) pocket.

Belongs to the peptidase M20A family. Zn(2+) is required as a cofactor.

It localises to the secreted. The chain is Probable carboxypeptidase UREG_07869 from Uncinocarpus reesii (strain UAMH 1704).